We begin with the raw amino-acid sequence, 496 residues long: Probable uroporphyrinogen-III C-methyltransferase (496 aa).

It belongs to the precorrin methyltransferase family.

The enzyme catalyses uroporphyrinogen III + 2 S-adenosyl-L-methionine = precorrin-2 + 2 S-adenosyl-L-homocysteine + H(+). In terms of biological role, siroheme synthase involved in methionine biosynthesis. The polypeptide is Probable uroporphyrinogen-III C-methyltransferase (Schizosaccharomyces pombe (strain 972 / ATCC 24843) (Fission yeast)).